The following is a 307-amino-acid chain: tRNA dimethylallyltransferase (307 aa).

9–16 (GPTAVGKT) provides a ligand contact to ATP. Position 11-16 (11-16 (TAVGKT)) interacts with substrate. The tract at residues 34–37 (DSMQ) is interaction with substrate tRNA.

The protein belongs to the IPP transferase family. In terms of assembly, monomer. It depends on Mg(2+) as a cofactor.

It catalyses the reaction adenosine(37) in tRNA + dimethylallyl diphosphate = N(6)-dimethylallyladenosine(37) in tRNA + diphosphate. Its function is as follows. Catalyzes the transfer of a dimethylallyl group onto the adenine at position 37 in tRNAs that read codons beginning with uridine, leading to the formation of N6-(dimethylallyl)adenosine (i(6)A). The polypeptide is tRNA dimethylallyltransferase (Levilactobacillus brevis (strain ATCC 367 / BCRC 12310 / CIP 105137 / JCM 1170 / LMG 11437 / NCIMB 947 / NCTC 947) (Lactobacillus brevis)).